Reading from the N-terminus, the 316-residue chain is Ribosomal protein L11 methyltransferase (316 aa).

Residues threonine 157, glycine 178, aspartate 200, and asparagine 243 each coordinate S-adenosyl-L-methionine.

The protein belongs to the methyltransferase superfamily. PrmA family.

It is found in the cytoplasm. It carries out the reaction L-lysyl-[protein] + 3 S-adenosyl-L-methionine = N(6),N(6),N(6)-trimethyl-L-lysyl-[protein] + 3 S-adenosyl-L-homocysteine + 3 H(+). Methylates ribosomal protein L11. The chain is Ribosomal protein L11 methyltransferase from Streptococcus pneumoniae serotype 4 (strain ATCC BAA-334 / TIGR4).